A 271-amino-acid polypeptide reads, in one-letter code: Solute carrier family 66 member 2 (271 aa).

The next 3 helical transmembrane spans lie at 8–28, 49–69, and 76–96; these read WLLV…MVFG, FSTY…LFWF, and PLLW…KLCT. Residues 14–80 enclose the PQ-loop 1 domain; the sequence is HQLVSWGAAA…RRFESPLLWQ (67 aa). Phosphoserine is present on Ser-110. 3 helical membrane-spanning segments follow: residues 145-165, 168-188, and 232-252; these read DYVQ…YLSI, ALFV…LGVP, and VCGL…YAFA. Positions 178 to 233 constitute a PQ-loop 2 domain; that stretch reads AVLTEAMLGVPQLYRNHRHQSTEGMSIKMVLMWTSGDAFKTAYFLLKGAPLQFSVC.

It is found in the membrane. The protein is Solute carrier family 66 member 2 of Homo sapiens (Human).